The primary structure comprises 297 residues: Nucleotide-binding protein BURPS668_0577 (297 aa).

ATP is bound at residue 8–15 (GISGSGKS). 57-60 (DARS) serves as a coordination point for GTP.

This sequence belongs to the RapZ-like family.

In terms of biological role, displays ATPase and GTPase activities. The polypeptide is Nucleotide-binding protein BURPS668_0577 (Burkholderia pseudomallei (strain 668)).